The chain runs to 135 residues: Evasin P1134 (135 aa).

Positions 1-31 are cleaved as a signal peptide; the sequence is MEVKTFAFLQIAVFIALGIQIFAAVTAAADA. Cystine bridges form between cysteine 41–cysteine 63, cysteine 45–cysteine 65, and cysteine 56–cysteine 76. Residue asparagine 44 is glycosylated (N-linked (GlcNAc...) asparagine). A disordered region spans residues 88 to 112; the sequence is ETPSNSDLEAATPRPRKTLYPVRNP.

Its subcellular location is the secreted. Functionally, salivary chemokine-binding protein which binds to host chemokine CXCL1. This is Evasin P1134 from Ixodes ricinus (Common tick).